Reading from the N-terminus, the 126-residue chain is MKSAVLFLLGIIFLEQCGVRGTLVIRNARCSCISTSRGTIHYKSLKDLKQFAPSPNCNKTEIIATLKNGDQTCLDPDSANVKKLMKEWEKKISQKKKQKRGKKHQKNMKNRKPKTPQSRRRSRKTT.

An N-terminal signal peptide occupies residues 1-21 (MKSAVLFLLGIIFLEQCGVRG). Intrachain disulfides connect Cys30-Cys57 and Cys32-Cys73. N-linked (GlcNAc...) asparagine glycosylation occurs at Asn58. The tract at residues 91–126 (KISQKKKQKRGKKHQKNMKNRKPKTPQSRRRSRKTT) is disordered. The span at 93-126 (SQKKKQKRGKKHQKNMKNRKPKTPQSRRRSRKTT) shows a compositional bias: basic residues.

The protein belongs to the intercrine alpha (chemokine CxC) family.

Its subcellular location is the secreted. Functionally, may be a cytokine that affects the growth, movement, or activation state of cells that participate in immune and inflammatory response. This chain is C-X-C motif chemokine 9 (Cxcl9), found in Mus musculus (Mouse).